We begin with the raw amino-acid sequence, 473 residues long: Hexaprenyl pyrophosphate synthase, mitochondrial (473 aa).

Positions 84, 87, and 186 each coordinate isopentenyl diphosphate. Positions 193 and 197 each coordinate Mg(2+). Arg-202 contributes to the an all-trans-polyprenyl diphosphate binding site. Arg-203 provides a ligand contact to isopentenyl diphosphate. An all-trans-polyprenyl diphosphate contacts are provided by Lys-323, Thr-324, Gln-361, and Lys-378.

Belongs to the FPP/GGPP synthase family. Mg(2+) serves as cofactor.

It is found in the mitochondrion inner membrane. It functions in the pathway cofactor biosynthesis; ubiquinone biosynthesis. In terms of biological role, assembly of polyisoprenoid side chains. The polyprenyl synthase of coenzyme Q biosynthesis catalyzes the formation from isopentenyl diphosphate of all trans-polyprenyl pyrophosphates generally ranging in length of between 6 and 10 isoprene units depending on the species. In Saccharomyces cerevisiae (strain ATCC 204508 / S288c) (Baker's yeast), this protein is Hexaprenyl pyrophosphate synthase, mitochondrial (COQ1).